A 439-amino-acid polypeptide reads, in one-letter code: tRNA-2-methylthio-N(6)-dimethylallyladenosine synthase (439 aa).

In terms of domain architecture, MTTase N-terminal spans 2 to 119; sequence KKLYLKTHGC…LPDLLDSVIQ (118 aa). Positions 11, 48, 82, 156, 160, and 163 each coordinate [4Fe-4S] cluster. In terms of domain architecture, Radical SAM core spans 142–374; sequence RAEGPSAFVS…QNRINAKAAE (233 aa). The TRAM domain maps to 377 to 439; that stretch reads QSMVGTQQRI…RPYSLWGEIC (63 aa).

This sequence belongs to the methylthiotransferase family. MiaB subfamily. In terms of assembly, monomer. Requires [4Fe-4S] cluster as cofactor.

It is found in the cytoplasm. The catalysed reaction is N(6)-dimethylallyladenosine(37) in tRNA + (sulfur carrier)-SH + AH2 + 2 S-adenosyl-L-methionine = 2-methylsulfanyl-N(6)-dimethylallyladenosine(37) in tRNA + (sulfur carrier)-H + 5'-deoxyadenosine + L-methionine + A + S-adenosyl-L-homocysteine + 2 H(+). In terms of biological role, catalyzes the methylthiolation of N6-(dimethylallyl)adenosine (i(6)A), leading to the formation of 2-methylthio-N6-(dimethylallyl)adenosine (ms(2)i(6)A) at position 37 in tRNAs that read codons beginning with uridine. This chain is tRNA-2-methylthio-N(6)-dimethylallyladenosine synthase, found in Coxiella burnetii (strain CbuK_Q154) (Coxiella burnetii (strain Q154)).